Consider the following 203-residue polypeptide: Octanoyltransferase (203 aa).

One can recognise a BPL/LPL catalytic domain in the interval 30–203 (EDQDNYFFIT…HIIKEGRKLV (174 aa)). Residues 69–76 (RGGSVTFH), 135–137 (SVG), and 148–150 (GIS) contribute to the substrate site. The active-site Acyl-thioester intermediate is the Cys-166.

Belongs to the LipB family.

Its subcellular location is the cytoplasm. The catalysed reaction is octanoyl-[ACP] + L-lysyl-[protein] = N(6)-octanoyl-L-lysyl-[protein] + holo-[ACP] + H(+). It participates in protein modification; protein lipoylation via endogenous pathway; protein N(6)-(lipoyl)lysine from octanoyl-[acyl-carrier-protein]: step 1/2. Catalyzes the transfer of endogenously produced octanoic acid from octanoyl-acyl-carrier-protein onto the lipoyl domains of lipoate-dependent enzymes. Lipoyl-ACP can also act as a substrate although octanoyl-ACP is likely to be the physiological substrate. The protein is Octanoyltransferase of Persephonella marina (strain DSM 14350 / EX-H1).